A 157-amino-acid polypeptide reads, in one-letter code: Peptide methionine sulfoxide reductase MsrA (157 aa).

C10 is a catalytic residue.

It belongs to the MsrA Met sulfoxide reductase family.

It carries out the reaction L-methionyl-[protein] + [thioredoxin]-disulfide + H2O = L-methionyl-(S)-S-oxide-[protein] + [thioredoxin]-dithiol. The enzyme catalyses [thioredoxin]-disulfide + L-methionine + H2O = L-methionine (S)-S-oxide + [thioredoxin]-dithiol. Its function is as follows. Has an important function as a repair enzyme for proteins that have been inactivated by oxidation. Catalyzes the reversible oxidation-reduction of methionine sulfoxide in proteins to methionine. The protein is Peptide methionine sulfoxide reductase MsrA of Clostridium botulinum (strain Okra / Type B1).